Here is a 247-residue protein sequence, read N- to C-terminus: Probable transcriptional regulatory protein Gbem_3313 (247 aa).

Belongs to the TACO1 family.

It localises to the cytoplasm. The protein is Probable transcriptional regulatory protein Gbem_3313 of Citrifermentans bemidjiense (strain ATCC BAA-1014 / DSM 16622 / JCM 12645 / Bem) (Geobacter bemidjiensis).